A 316-amino-acid chain; its full sequence is tRNA pseudouridine synthase B (316 aa).

The active-site Nucleophile is the Asp-47.

This sequence belongs to the pseudouridine synthase TruB family. Type 1 subfamily.

It carries out the reaction uridine(55) in tRNA = pseudouridine(55) in tRNA. Functionally, responsible for synthesis of pseudouridine from uracil-55 in the psi GC loop of transfer RNAs. The polypeptide is tRNA pseudouridine synthase B (Aliivibrio fischeri (strain MJ11) (Vibrio fischeri)).